Consider the following 319-residue polypeptide: tRNA uridine(34) hydroxylase (319 aa).

The Rhodanese domain maps to 125 to 219 (LDENTVVIDA…YGKDPEVQGD (95 aa)). The active-site Cysteine persulfide intermediate is C179.

The protein belongs to the TrhO family.

It catalyses the reaction uridine(34) in tRNA + AH2 + O2 = 5-hydroxyuridine(34) in tRNA + A + H2O. Its function is as follows. Catalyzes oxygen-dependent 5-hydroxyuridine (ho5U) modification at position 34 in tRNAs. This is tRNA uridine(34) hydroxylase from Lactococcus lactis subsp. lactis (strain IL1403) (Streptococcus lactis).